Consider the following 67-residue polypeptide: DNA-directed RNA polymerase subunit omega (67 aa).

Belongs to the RNA polymerase subunit omega family. The RNAP catalytic core consists of 2 alpha, 1 beta, 1 beta' and 1 omega subunit. When a sigma factor is associated with the core the holoenzyme is formed, which can initiate transcription.

It carries out the reaction RNA(n) + a ribonucleoside 5'-triphosphate = RNA(n+1) + diphosphate. In terms of biological role, promotes RNA polymerase assembly. Latches the N- and C-terminal regions of the beta' subunit thereby facilitating its interaction with the beta and alpha subunits. This Moorella thermoacetica (strain ATCC 39073 / JCM 9320) protein is DNA-directed RNA polymerase subunit omega.